The following is a 429-amino-acid chain: Ribosomal RNA small subunit methyltransferase B (429 aa).

S-adenosyl-L-methionine contacts are provided by residues 254–260 (CAAPGGK), Asp277, Asp303, and Asp322. Cys375 acts as the Nucleophile in catalysis.

It belongs to the class I-like SAM-binding methyltransferase superfamily. RsmB/NOP family.

Its subcellular location is the cytoplasm. The enzyme catalyses cytidine(967) in 16S rRNA + S-adenosyl-L-methionine = 5-methylcytidine(967) in 16S rRNA + S-adenosyl-L-homocysteine + H(+). Its function is as follows. Specifically methylates the cytosine at position 967 (m5C967) of 16S rRNA. In Escherichia fergusonii (strain ATCC 35469 / DSM 13698 / CCUG 18766 / IAM 14443 / JCM 21226 / LMG 7866 / NBRC 102419 / NCTC 12128 / CDC 0568-73), this protein is Ribosomal RNA small subunit methyltransferase B.